The chain runs to 139 residues: Acidic phospholipase A2 H1E6 (139 aa).

Residues 1–16 (MRTLWILAVLQVGVEG) form the signal peptide. Cystine bridges form between cysteine 42-cysteine 132, cysteine 44-cysteine 60, cysteine 59-cysteine 111, cysteine 65-cysteine 139, cysteine 66-cysteine 104, cysteine 73-cysteine 97, and cysteine 91-cysteine 102. Ca(2+) contacts are provided by tyrosine 43, glycine 45, and glycine 47. Residue histidine 63 is part of the active site. Aspartate 64 serves as a coordination point for Ca(2+). Aspartate 105 is an active-site residue.

Homodimer. Requires Ca(2+) as cofactor. As to expression, expressed by the venom gland.

It localises to the secreted. It carries out the reaction a 1,2-diacyl-sn-glycero-3-phosphocholine + H2O = a 1-acyl-sn-glycero-3-phosphocholine + a fatty acid + H(+). Its function is as follows. Snake venom phospholipase A2 (PLA2) that inhibits ADP-induced platelet aggregation. PLA2 catalyzes the calcium-dependent hydrolysis of the 2-acyl groups in 3-sn-phosphoglycerides. This is Acidic phospholipase A2 H1E6 from Calloselasma rhodostoma (Malayan pit viper).